The chain runs to 133 residues: MALEKLTPAAGSTHATKRIGRGQGSGNGKTAGKGNKGQRARKGYNEKRGFEGGQQPLQRRLPKVGFASKFEKPYVINVEKIAAIKELAEISIATIASVHKISKSVTKIKLIGASAKALASKIKDENVSVSGTK.

A disordered region spans residues 1–57; that stretch reads MALEKLTPAAGSTHATKRIGRGQGSGNGKTAGKGNKGQRARKGYNEKRGFEGGQQPL. Residues 21 to 35 show a composition bias toward gly residues; that stretch reads RGQGSGNGKTAGKGN.

This sequence belongs to the universal ribosomal protein uL15 family. As to quaternary structure, part of the 50S ribosomal subunit.

Binds to the 23S rRNA. This Campylobacter concisus (strain 13826) protein is Large ribosomal subunit protein uL15.